A 56-amino-acid chain; its full sequence is uncharacterized protein (56 aa).

This sequence belongs to the archaeal ATPase family.

This is an uncharacterized protein from Methanocaldococcus jannaschii (strain ATCC 43067 / DSM 2661 / JAL-1 / JCM 10045 / NBRC 100440) (Methanococcus jannaschii).